Consider the following 284-residue polypeptide: Bifunctional protein FolD (284 aa).

166-168 (GAS) contributes to the NADP(+) binding site.

This sequence belongs to the tetrahydrofolate dehydrogenase/cyclohydrolase family. As to quaternary structure, homodimer.

The enzyme catalyses (6R)-5,10-methylene-5,6,7,8-tetrahydrofolate + NADP(+) = (6R)-5,10-methenyltetrahydrofolate + NADPH. It carries out the reaction (6R)-5,10-methenyltetrahydrofolate + H2O = (6R)-10-formyltetrahydrofolate + H(+). The protein operates within one-carbon metabolism; tetrahydrofolate interconversion. Functionally, catalyzes the oxidation of 5,10-methylenetetrahydrofolate to 5,10-methenyltetrahydrofolate and then the hydrolysis of 5,10-methenyltetrahydrofolate to 10-formyltetrahydrofolate. The protein is Bifunctional protein FolD of Nitrosococcus oceani (strain ATCC 19707 / BCRC 17464 / JCM 30415 / NCIMB 11848 / C-107).